We begin with the raw amino-acid sequence, 149 residues long: Nucleoside diphosphate kinase (149 aa).

ATP-binding residues include lysine 9, phenylalanine 57, arginine 85, threonine 91, arginine 102, and asparagine 112. Histidine 115 functions as the Pros-phosphohistidine intermediate in the catalytic mechanism.

The protein belongs to the NDK family. As to quaternary structure, homotetramer. Mg(2+) serves as cofactor.

It localises to the cytoplasm. It catalyses the reaction dZDP + ATP = dZTP + ADP. The catalysed reaction is a 2'-deoxyribonucleoside 5'-diphosphate + ATP = a 2'-deoxyribonucleoside 5'-triphosphate + ADP. It carries out the reaction a ribonucleoside 5'-diphosphate + ATP = a ribonucleoside 5'-triphosphate + ADP. It participates in purine metabolism. In terms of biological role, major role in the synthesis of nucleoside triphosphates other than ATP. The ATP gamma phosphate is transferred to the NDP beta phosphate via a ping-pong mechanism, using a phosphorylated active-site intermediate. Its function is as follows. (Microbial infection) Catalyzes the phosphorylation of dZDP to dZTP, when the bacterium is infected by a phage that produces the substrate for the synthesis of dZTP (2- amino-2'-deoxyadenosine 5'-triphosphate), which is then used by the phage as a DNA polymerase substrate. The chain is Nucleoside diphosphate kinase from Synechococcus elongatus (strain ATCC 33912 / PCC 7942 / FACHB-805) (Anacystis nidulans R2).